A 173-amino-acid polypeptide reads, in one-letter code: Small ribosomal subunit protein uS5 (173 aa).

An S5 DRBM domain is found at 18–81 (LREKMIAVNR…EQARRGMFKV (64 aa)).

This sequence belongs to the universal ribosomal protein uS5 family. In terms of assembly, part of the 30S ribosomal subunit. Contacts proteins S4 and S8.

Its function is as follows. With S4 and S12 plays an important role in translational accuracy. Located at the back of the 30S subunit body where it stabilizes the conformation of the head with respect to the body. This is Small ribosomal subunit protein uS5 from Bordetella petrii (strain ATCC BAA-461 / DSM 12804 / CCUG 43448).